We begin with the raw amino-acid sequence, 800 residues long: Putative antiporter subunit mnhA2 (800 aa).

A run of 21 helical transmembrane segments spans residues 3–23 (LVYL…TLFI), 29–49 (FAGY…LAQI), 78–98 (GLGL…FFYA), 109–129 (LPRF…IVVS), 133–153 (ILMY…ISYW), 167–187 (FIIT…LYII), 202–222 (SISE…GAFT), 249–269 (SATM…ILGL), 273–293 (YIYI…VTAL), 300–320 (GILA…VGLG), 337–357 (LILF…CALF), 387–407 (LVMT…GFLS), 428–448 (LTII…VYAV), 472–492 (PWLF…IFFI), 527–547 (GVNL…ILAL), 596–616 (IITV…VGLP), 627–647 (GPLE…LVFI), 651–671 (LTMV…FLLM), 676–696 (LALT…VSFS), 712–732 (TIKI…IFIA), and 768–788 (LDTM…YTLL).

The protein belongs to the CPA3 antiporters (TC 2.A.63) subunit A family. May form a heterooligomeric complex that consists of seven subunits: mnhA2, mnhB2, mnhC2, mnhD2, mnhE2, mnhF2 and mnhG2.

It is found in the cell membrane. The polypeptide is Putative antiporter subunit mnhA2 (mnhA2) (Staphylococcus haemolyticus (strain JCSC1435)).